We begin with the raw amino-acid sequence, 662 residues long: UvrABC system protein B (662 aa).

A Helicase ATP-binding domain is found at 25 to 182 (KGIEKGEKFQ…KKLVEIQYER (158 aa)). Residue 38 to 45 (GVTGSGKT) participates in ATP binding. The Beta-hairpin motif lies at 91 to 114 (YYDYYQPEAYVAQSDTYIEKDASI). A Helicase C-terminal domain is found at 429–595 (QIDDLYTSIQ…TIIKDIREVI (167 aa)). Residues 622 to 657 (DKLIEKYEEEMKEAAQNLQFEKAAHLRDVIYKLKRD) enclose the UVR domain.

The protein belongs to the UvrB family. Forms a heterotetramer with UvrA during the search for lesions. Interacts with UvrC in an incision complex.

The protein resides in the cytoplasm. Its function is as follows. The UvrABC repair system catalyzes the recognition and processing of DNA lesions. A damage recognition complex composed of 2 UvrA and 2 UvrB subunits scans DNA for abnormalities. Upon binding of the UvrA(2)B(2) complex to a putative damaged site, the DNA wraps around one UvrB monomer. DNA wrap is dependent on ATP binding by UvrB and probably causes local melting of the DNA helix, facilitating insertion of UvrB beta-hairpin between the DNA strands. Then UvrB probes one DNA strand for the presence of a lesion. If a lesion is found the UvrA subunits dissociate and the UvrB-DNA preincision complex is formed. This complex is subsequently bound by UvrC and the second UvrB is released. If no lesion is found, the DNA wraps around the other UvrB subunit that will check the other stand for damage. This is UvrABC system protein B from Clostridium botulinum (strain Loch Maree / Type A3).